A 642-amino-acid chain; its full sequence is Threonine--tRNA ligase (642 aa).

In terms of domain architecture, TGS spans 1–61 (MPVITLPDGS…DTDSELSIIT (61 aa)). The catalytic stretch occupies residues 243–534 (DHRKIGKQLD…LIEEYAGKFP (292 aa)). Cysteine 334, histidine 385, and histidine 511 together coordinate Zn(2+).

This sequence belongs to the class-II aminoacyl-tRNA synthetase family. As to quaternary structure, homodimer. The cofactor is Zn(2+).

Its subcellular location is the cytoplasm. It carries out the reaction tRNA(Thr) + L-threonine + ATP = L-threonyl-tRNA(Thr) + AMP + diphosphate + H(+). Functionally, catalyzes the attachment of threonine to tRNA(Thr) in a two-step reaction: L-threonine is first activated by ATP to form Thr-AMP and then transferred to the acceptor end of tRNA(Thr). Also edits incorrectly charged L-seryl-tRNA(Thr). In Shewanella piezotolerans (strain WP3 / JCM 13877), this protein is Threonine--tRNA ligase.